The chain runs to 349 residues: MDTIAARALTVMRACATLQEARIVLEANVMEILGIAINRYNGLTLRGVTMRPTSLAQRNEMFFMCLDMMLSAAGINVGPISPDYTQHMATIGVLATPEIPFTTEAANEIARVTGETSTWGPARQPYGFFLETEETFQPGRWFMRAAQAVAAVVCGPDMIQVSLNAGARGDVQQIFQGRNDPMMIYLVWRRIENFAMAQGNSQQTQAGVTVSVGGVDMRAGRIIAWDGQAALHVHNPTQQNAMVQIQVVFYISMDKTLNQYPALTAEIFNVYSFRDHTWHGLRTAILNRTTLPNMLPPIFPPNDRDSILTLLLLSTLADVYTVLRPEFAIHGVNPMPGPLTRAIARAAYV.

Asparagine 287 carries an N-linked (GlcNAc...) asparagine; by host glycan.

It belongs to the orbivirus VP7 family. As to quaternary structure, homotrimer that assemble in a complex of 260 capsomers on an inner scaffold composed of VP3.

It localises to the virion. The VP7 protein is one of the five proteins (with VP1, VP3, VP4, and VP6) which form the inner capsid of the virus. This is Core protein VP7 (Segment-7) from Antilocapra americana (Pronghorn).